The primary structure comprises 227 residues: Germin-like protein subfamily 1 member 6 (227 aa).

Residues Met1 to Cys25 form the signal peptide. A disulfide bond links Cys35 and Cys51. The region spanning Ser65 to Arg216 is the Cupin type-1 domain. 2 N-linked (GlcNAc...) asparagine glycosylation sites follow: Asn72 and Asn80. Mn(2+) is bound by residues His113, His115, Glu120, and His162.

This sequence belongs to the germin family. In terms of assembly, oligomer (believed to be a pentamer but probably hexamer).

The protein localises to the secreted. It is found in the extracellular space. The protein resides in the apoplast. Its function is as follows. May play a role in plant defense. Probably has no oxalate oxidase activity even if the active site is conserved. This chain is Germin-like protein subfamily 1 member 6, found in Arabidopsis thaliana (Mouse-ear cress).